Reading from the N-terminus, the 588-residue chain is MFS siderochrome iron transporter 1 (588 aa).

The next 13 membrane-spanning stretches (helical) occupy residues 60-80 (QVWS…ITFV), 104-124 (LTAS…LPLA), 133-153 (PQGF…MAAC), 161-181 (AAQV…SIFI), 191-211 (ALMF…GGPL), 225-245 (YGAF…VFAW), 278-298 (IIGI…FSLY), 307-327 (SSLV…FALY), 348-368 (LGAC…DSYF), 385-405 (YIVN…GILV), 413-433 (WLAL…MITF), 440-460 (IGYI…CVIT), and 473-495 (YVAV…GQTV). An N-linked (GlcNAc...) asparagine glycan is attached at N519. The helical transmembrane segment at 552 to 572 (KYMLIGGTAILAVGLGATMMW) threads the bilayer.

Belongs to the major facilitator superfamily.

The protein resides in the membrane. Its function is as follows. Major facilitator transporter involved in siderophore transport. The chain is MFS siderochrome iron transporter 1 from Ajellomyces capsulatus (Darling's disease fungus).